We begin with the raw amino-acid sequence, 460 residues long: GTPase Der (460 aa).

2 EngA-type G domains span residues 2 to 164 (QSII…HEEF) and 196 to 368 (IRVG…ENFT). GTP is bound by residues 8-15 (GKPNVGKS), 55-59 (DSGGL), 116-119 (NKVD), 202-209 (GRVNVGKS), 249-253 (DTAGI), and 313-316 (NKWD). The KH-like domain occupies 369-453 (QKIQTSKLNT…PLVIASRKKG (85 aa)).

It belongs to the TRAFAC class TrmE-Era-EngA-EngB-Septin-like GTPase superfamily. EngA (Der) GTPase family. In terms of assembly, associates with the 50S ribosomal subunit.

In terms of biological role, GTPase that plays an essential role in the late steps of ribosome biogenesis. In Campylobacter jejuni subsp. jejuni serotype O:23/36 (strain 81-176), this protein is GTPase Der.